Consider the following 196-residue polypeptide: Large ribosomal subunit protein eL15 (196 aa).

The tract at residues 156-196 is disordered; that stretch reads HRGRAERGKTSAGRKGRGMRTRGRGTEKTRPSIRSHANQGK. Over residues 167–178 the composition is skewed to basic residues; that stretch reads AGRKGRGMRTRG.

It belongs to the eukaryotic ribosomal protein eL15 family.

This is Large ribosomal subunit protein eL15 from Methanoregula boonei (strain DSM 21154 / JCM 14090 / 6A8).